The primary structure comprises 456 residues: MTQTETMAAAGAAKTEPKVRPAKALQGVKGMNDMLPADAPLWEHFENAARAMLRAYGYQQIRTPIVEHTQLFVRGIGEVTDIVEKEMYSFTDSLNGEQLTLRPEGTAAAVRATIEHNLLYDGPKRLWYTGPMFRHERPQRGRYRQFHQLGAEALGFAGPDVDAEIILMCQRLWDDLGLTGVRLEINSLGQADERAAHREQLIKYLEGFQDILDDDSKRRLYTNPLRVLDTKNPALQDMAANAPKLIDFLGEESLAHFEGVQRLLKANNIPFKINPRLVRGLDYYNLTVFEWITDKLGAQGTIAGGGRYDPLIAQMGGKPAPACGWAMGIERIIELIREEGVVPDAVGCDVYLVHQGEAAAQQAMVAAERLRDAGLDVVLHASPDGKGGSFKSQMKRADASGAAYAVIIGDDEVAAGVVQVKELRQREQAEGGGQQATVPADGLVDYLIDAMVGASE.

It belongs to the class-II aminoacyl-tRNA synthetase family. In terms of assembly, homodimer.

It localises to the cytoplasm. The catalysed reaction is tRNA(His) + L-histidine + ATP = L-histidyl-tRNA(His) + AMP + diphosphate + H(+). This is Histidine--tRNA ligase from Cupriavidus taiwanensis (strain DSM 17343 / BCRC 17206 / CCUG 44338 / CIP 107171 / LMG 19424 / R1) (Ralstonia taiwanensis (strain LMG 19424)).